A 72-amino-acid polypeptide reads, in one-letter code: Conotoxin im23a (72 aa).

A signal peptide spans 1 to 22 (MIMRMTLTLFVLVVMTAASASG). Positions 23–28 (DALTEA) are excised as a propeptide. 3 disulfide bridges follow: Cys-34–Cys-41, Cys-45–Cys-55, and Cys-56–Cys-71.

The protein belongs to the conotoxin K superfamily. As to expression, expressed by the venom duct.

Its subcellular location is the secreted. Its function is as follows. Neurotoxin that induces excitatory symptoms in mice following intracranial administration. No symptoms are observed after intraperitoneal and intravenous (tail vein) injections. This Conus imperialis (Imperial cone) protein is Conotoxin im23a.